The sequence spans 83 residues: Small ribosomal subunit protein bS20 (83 aa).

It belongs to the bacterial ribosomal protein bS20 family.

Its function is as follows. Binds directly to 16S ribosomal RNA. This chain is Small ribosomal subunit protein bS20, found in Staphylococcus carnosus (strain TM300).